The sequence spans 473 residues: Probable aspartokinase (473 aa).

ACT domains follow at residues 323 to 392 and 409 to 473; these read IFGA…FLNN and VVGA…KTNS.

Belongs to the aspartokinase family.

It catalyses the reaction L-aspartate + ATP = 4-phospho-L-aspartate + ADP. The protein operates within amino-acid biosynthesis; L-lysine biosynthesis via DAP pathway; (S)-tetrahydrodipicolinate from L-aspartate: step 1/4. It functions in the pathway amino-acid biosynthesis; L-methionine biosynthesis via de novo pathway; L-homoserine from L-aspartate: step 1/3. Its pathway is amino-acid biosynthesis; L-threonine biosynthesis; L-threonine from L-aspartate: step 1/5. The sequence is that of Probable aspartokinase from Methanocaldococcus jannaschii (strain ATCC 43067 / DSM 2661 / JAL-1 / JCM 10045 / NBRC 100440) (Methanococcus jannaschii).